A 164-amino-acid chain; its full sequence is ATP synthase subunit b (164 aa).

The helical transmembrane segment at 6 to 26 (GELVGNFILVTGSVIVLLLLI) threads the bilayer.

This sequence belongs to the ATPase B chain family. F-type ATPases have 2 components, F(1) - the catalytic core - and F(0) - the membrane proton channel. F(1) has five subunits: alpha(3), beta(3), gamma(1), delta(1), epsilon(1). F(0) has three main subunits: a(1), b(2) and c(10-14). The alpha and beta chains form an alternating ring which encloses part of the gamma chain. F(1) is attached to F(0) by a central stalk formed by the gamma and epsilon chains, while a peripheral stalk is formed by the delta and b chains.

The protein localises to the cell membrane. Functionally, f(1)F(0) ATP synthase produces ATP from ADP in the presence of a proton or sodium gradient. F-type ATPases consist of two structural domains, F(1) containing the extramembraneous catalytic core and F(0) containing the membrane proton channel, linked together by a central stalk and a peripheral stalk. During catalysis, ATP synthesis in the catalytic domain of F(1) is coupled via a rotary mechanism of the central stalk subunits to proton translocation. Component of the F(0) channel, it forms part of the peripheral stalk, linking F(1) to F(0). The sequence is that of ATP synthase subunit b from Streptococcus pyogenes serotype M6 (strain ATCC BAA-946 / MGAS10394).